The chain runs to 415 residues: Gamma-glutamyl phosphate reductase (415 aa).

The protein belongs to the gamma-glutamyl phosphate reductase family.

The protein localises to the cytoplasm. The catalysed reaction is L-glutamate 5-semialdehyde + phosphate + NADP(+) = L-glutamyl 5-phosphate + NADPH + H(+). The protein operates within amino-acid biosynthesis; L-proline biosynthesis; L-glutamate 5-semialdehyde from L-glutamate: step 2/2. Functionally, catalyzes the NADPH-dependent reduction of L-glutamate 5-phosphate into L-glutamate 5-semialdehyde and phosphate. The product spontaneously undergoes cyclization to form 1-pyrroline-5-carboxylate. The chain is Gamma-glutamyl phosphate reductase from Thermotoga petrophila (strain ATCC BAA-488 / DSM 13995 / JCM 10881 / RKU-1).